Here is a 309-residue protein sequence, read N- to C-terminus: MADLQATLDSIYTDILPRIGEGKVADYIPELAKIDPRQFGMAIVTVDGQVFRVGDADIAFSIQSISKVFMLTLALGKVGEGLWKRVGREPSGSAFNSIVQLEHESGIPRNPFINAGAIAVTDVVMAGHAPREAIGELLRFVRYLADDESITIDDKVARSETQTGYRNVALANFMRAYRNLDHPVDHVLGVYFHQCALAMSCEQLARAGLFLAARGSNPMTGHSVVSPKRARRINALMLTCGHYDGSGDFAYHVGLPGKSGVGGGIFAVAPGIASIAVWSPGLNKVGNSQLGAVALEMLAARTGWSVFGD.

7 residues coordinate substrate: Ser64, Asn114, Glu160, Asn167, Tyr191, Tyr243, and Val261.

This sequence belongs to the glutaminase family. Homotetramer.

It catalyses the reaction L-glutamine + H2O = L-glutamate + NH4(+). This chain is Thermolabile glutaminase (glsA), found in Rhizobium etli (strain ATCC 51251 / DSM 11541 / JCM 21823 / NBRC 15573 / CFN 42).